Reading from the N-terminus, the 105-residue chain is ESAT-6-like protein EsxB (105 aa).

Positions 1 to 23 (MSQGFKTEADVMRNTAHRVDDTN) are disordered. A compositionally biased stretch (basic and acidic residues) spans 7–21 (TEADVMRNTAHRVDD).

The protein belongs to the WXG100 family. CFP-10 subfamily. In terms of assembly, forms a tight 1:1 complex with EsxB.

The protein is ESAT-6-like protein EsxB of Corynebacterium diphtheriae (strain ATCC 700971 / NCTC 13129 / Biotype gravis).